The chain runs to 279 residues: Large ribosomal subunit protein uL2 (279 aa).

Disordered regions lie at residues 1–43 (MGIK…TAGR) and 207–279 (KAGR…PGKH). The segment covering 8-22 (PTTNGRRNMTASDFS) has biased composition (polar residues). A compositionally biased stretch (basic and acidic residues) spans 23 to 33 (EITKTKPEKSL). Positions 34–43 (LDSQSHTAGR) are enriched in polar residues. Composition is skewed to basic residues over residues 209 to 219 (GRTRWQGKRPT) and 254 to 279 (TLGK…PGKH).

Belongs to the universal ribosomal protein uL2 family. Part of the 50S ribosomal subunit. Forms a bridge to the 30S subunit in the 70S ribosome.

Its function is as follows. One of the primary rRNA binding proteins. Required for association of the 30S and 50S subunits to form the 70S ribosome, for tRNA binding and peptide bond formation. It has been suggested to have peptidyltransferase activity; this is somewhat controversial. Makes several contacts with the 16S rRNA in the 70S ribosome. This Lactiplantibacillus plantarum (strain ATCC BAA-793 / NCIMB 8826 / WCFS1) (Lactobacillus plantarum) protein is Large ribosomal subunit protein uL2.